Consider the following 910-residue polypeptide: Protein translocase subunit SecA (910 aa).

ATP contacts are provided by residues glutamine 89, 107–111 (GEGKT), and aspartate 502. Cysteine 889, cysteine 891, cysteine 900, and histidine 901 together coordinate Zn(2+).

This sequence belongs to the SecA family. Monomer and homodimer. Part of the essential Sec protein translocation apparatus which comprises SecA, SecYEG and auxiliary proteins SecDF-YajC and YidC. Zn(2+) serves as cofactor.

It localises to the cell inner membrane. The protein localises to the cytoplasm. The catalysed reaction is ATP + H2O + cellular proteinSide 1 = ADP + phosphate + cellular proteinSide 2.. In terms of biological role, part of the Sec protein translocase complex. Interacts with the SecYEG preprotein conducting channel. Has a central role in coupling the hydrolysis of ATP to the transfer of proteins into and across the cell membrane, serving both as a receptor for the preprotein-SecB complex and as an ATP-driven molecular motor driving the stepwise translocation of polypeptide chains across the membrane. The sequence is that of Protein translocase subunit SecA from Bartonella bacilliformis (strain ATCC 35685 / KC583 / Herrer 020/F12,63).